We begin with the raw amino-acid sequence, 493 residues long: Lysine--tRNA ligase (493 aa).

Residues glutamate 406 and glutamate 413 each contribute to the Mg(2+) site.

Belongs to the class-II aminoacyl-tRNA synthetase family. In terms of assembly, homodimer. The cofactor is Mg(2+).

Its subcellular location is the cytoplasm. The enzyme catalyses tRNA(Lys) + L-lysine + ATP = L-lysyl-tRNA(Lys) + AMP + diphosphate. The sequence is that of Lysine--tRNA ligase from Leuconostoc citreum (strain KM20).